The sequence spans 522 residues: MSLLNCENSCGSSQSESDCCVAMASSCSAATKDDSVGGTASTGNLSSSFMEEIQGYDVEFDPPLESKYECPICLMALREAVQTPCGHRFCKACIIKSIRDAGHKCPVDNEILLENQLFPDNFAKREILSLMVKCPNEGCLHKMELRHLEDHQAHCEFALVDCPQCQRPFQKFHINIHILKDCPRRQVSCDNCAALVAFEDKEIHDQNCPLANVICEYCNTILIREQMPNHYDLDCPTAPIPCTFSTFGCHEKMQRNHLARHLQENTQSHMRMLAQAVHSLSLIPDSGYVSEVRNFQETIHQLEGRLVRQDHQIRELTAKMETQSTYVSELKRTIRTLEDKVAEIEAQQCNGIYIWKIGNFGMHLKCQEEEKPVVIHSPGFYTGKPGYKLCMRLHLQLPTAQRCANYISLFVHTMQGEYDSHLPWPFQGTIRLTILDQSEAPVRQNHEEIMDAKPDLLAFQRPTIPRNPKGFGYVTFMHLEALRQRTFIKDDTLLVRCEVSTRFDMGSLRREGFQPRSTDSGV.

The interaction with TAX1BP1 stretch occupies residues 1–354; sequence MSLLNCENSC…EAQQCNGIYI (354 aa). The RING-type; degenerate zinc finger occupies 70–109; that stretch reads CPICLMALREAVQTPCGHRFCKACIIKSIRDAGHKCPVDN. Lys124 participates in a covalent cross-link: Glycyl lysine isopeptide (Lys-Gly) (interchain with G-Cter in SUMO); alternate. Lys124 is covalently cross-linked (Glycyl lysine isopeptide (Lys-Gly) (interchain with G-Cter in ubiquitin); alternate). Lys142 is covalently cross-linked (Glycyl lysine isopeptide (Lys-Gly) (interchain with G-Cter in SUMO)). 2 consecutive TRAF-type zinc fingers follow at residues 150-202 and 203-259; these read DHQA…EDKE and IHDQ…NHLA. Residues 288-348 adopt a coiled-coil conformation; that stretch reads YVSEVRNFQE…DKVAEIEAQQ (61 aa). Residue Lys319 forms a Glycyl lysine isopeptide (Lys-Gly) (interchain with G-Cter in ubiquitin) linkage. An MATH domain is found at 350 to 499; sequence NGIYIWKIGN…DDTLLVRCEV (150 aa). The interval 355 to 522 is interaction with TANK; the sequence is WKIGNFGMHL…FQPRSTDSGV (168 aa). A Glycyl lysine isopeptide (Lys-Gly) (interchain with G-Cter in SUMO) cross-link involves residue Lys453.

This sequence belongs to the TNF receptor-associated factor family. A subfamily. In terms of assembly, homotrimer. Homooligomer. N-terminal region is dimeric while C-terminal region is trimeric; maybe providing a mode of oligomerization. Upon IL1B treatment, forms a complex with PELI1, IRAK1, IRAK4 and MYD88; this complex recruits MAP3K7/TAK1, TAB1 and TAB2 to mediate NF-kappa-B activation. Direct binding of SMAD6 to PELI1 prevents the complex formation and hence negatively regulates IL1R-TLR signaling and eventually NF-kappa-B-mediated gene expression. Binds to TNFRSF5/CD40 and TNFRSF11A/RANK. Associates with NGFR, TNFRSF17, IRAK2, IRAK3, RIPK2, MAP3K1, MAP3K5, MAP3K14, CSK, TRAF, TRAF-interacting protein TRIP and TNF receptor associated protein TDP2. Interacts with IL17R. Interacts with SQSTM1 bridging NTRK1 and NGFR. Forms a ternary complex with SQSTM1 and PRKCZ. Interacts with PELI2 and PELI3. Binds UBE2V1. Interacts with TAX1BP1; this interaction mediates deubiquitination of TRAF6 and inhibition of NF-kappa-B activation. Interacts with ZNF675. Interacts with ARRB1 and ARRB2. Interacts with MAP3K7 and TAB1/MAP3K7IP1; during IL-1 signaling. Interacts with UBE2N. Interacts with TGFBR1, HDAC1 and RANGAP1. Interacts with AKT1, AKT2 and AKT3. Interacts (via TRAF domains) with NUMBL (via C-terminal). Interacts with RBCK1. Interacts with LIMD1 (via LIM domains). Interacts with RSAD2/viperin. Interacts (via C-terminus) with EIF2AK2/PKR (via the kinase catalytic domain). Interacts with ZFAND5. Interacts with IL1RL1. Interacts with TRAFD1. Interacts with AJUBA. Interacts with MAVS/IPS1. Interacts (via TRAF domains) with DYNC2I2 (via WD domains). Interacts with IFIT3 (via N-terminus). Interacts with TICAM2. Interacts with CARD14. Interacts with CD40 and MAP3K8; the interaction is required for ERK activation. Interacts with TICAM1 and this interaction is enhanced in the presence of WDFY1. Interacts with TANK; this interaction increases in response to DNA damage. Interacts with USP10; this interaction increases in response to DNA damage. Interacts with ZC3H12A; this interaction increases in response to DNA damage and is stimulated by TANK. Interacts with WDFY3. Interacts with TRIM13. Interacts with GPS2. Interacts (via C-terminus) with SASH1. Interacts with LRRC19. Interacts with IL17RA and TRAF3IP2. Interacts with TOMM70. Interacts with AMBRA1; interaction is required to mediate 'Lys-63'-linked ubiquitination of ULK1. Interacts with CRBN; this interaction inhibits TLR4-mediated signaling by preventing TRAF6-mediated ubiquitination of ECSIT. Sumoylated on Lys-124, Lys-142 and Lys-453 with SUMO1. Post-translationally, polyubiquitinated on Lys-124 by TRAF3IP2; after cell stimulation with IL17A. Polyubiquitinated on Lys-124; after cell stimulation with IL1B or TGFB. This ligand-induced cell stimulation leads to dimerization/oligomerization of TRAF6 molecules, followed by auto-ubiquitination which involves UBE2N and UBE2V1 and leads to TRAF6 activation. This 'Lys-63' site-specific poly-ubiquitination appears to be associated with the activation of signaling molecules. Deubiquitinated by USP10 in a TANK-dependent manner, leading to the negative regulation of NF-kappa-B signaling upon DNA damage. LRRC19 induces 'Lys-63' ubiquitination. Ubiquitinated at Lys-319 by the SCF(FBXL2) complex, leading to its degradation by the proteasome.

It localises to the cytoplasm. The protein localises to the cell cortex. Its subcellular location is the nucleus. The protein resides in the lipid droplet. It catalyses the reaction S-ubiquitinyl-[E2 ubiquitin-conjugating enzyme]-L-cysteine + [acceptor protein]-L-lysine = [E2 ubiquitin-conjugating enzyme]-L-cysteine + N(6)-ubiquitinyl-[acceptor protein]-L-lysine.. It participates in protein modification; protein ubiquitination. Its function is as follows. E3 ubiquitin ligase that, together with UBE2N and UBE2V1, mediates the synthesis of 'Lys-63'-linked-polyubiquitin chains conjugated to proteins, such as ECSIT, IKBKG, IRAK1, AKT1 and AKT2. Also mediates ubiquitination of free/unanchored polyubiquitin chain that leads to MAP3K7 activation. Leads to the activation of NF-kappa-B and JUN. Seems to also play a role in dendritic cells (DCs) maturation and/or activation. Represses c-Myb-mediated transactivation, in B-lymphocytes. Adapter protein that seems to play a role in signal transduction initiated via TNF receptor, IL-1 receptor and IL-17 receptor. Regulates osteoclast differentiation by mediating the activation of adapter protein complex 1 (AP-1) and NF-kappa-B, in response to RANK-L stimulation. Together with MAP3K8, mediates CD40 signals that activate ERK in B-cells and macrophages, and thus may play a role in the regulation of immunoglobulin production. Acts as a regulator of the JNK and NF-kappa-B signaling pathways by initiating assembly of heterotypic 'Lys-63'-/'Lys-48'-linked branched ubiquitin chains that are then recognized by TAB2: TRAF6 catalyzes initial 'Lys-63'-linked-polyubiquitin chains that are then branched via 'Lys-48'-linked polyubiquitin by HUWE1. 'Lys-63'-/'Lys-48'-linked branched ubiquitin chains protect 'Lys-63'-linkages from CYLD deubiquitination. Also participates in the TCR signaling by ubiquitinating LAT. In Cercocebus atys (Sooty mangabey), this protein is TNF receptor-associated factor 6 (TRAF6).